We begin with the raw amino-acid sequence, 527 residues long: ATP synthase subunit alpha (527 aa).

177–184 contacts ATP; sequence GDRQTGKT.

Belongs to the ATPase alpha/beta chains family. In terms of assembly, F-type ATPases have 2 components, CF(1) - the catalytic core - and CF(0) - the membrane proton channel. CF(1) has five subunits: alpha(3), beta(3), gamma(1), delta(1), epsilon(1). CF(0) has four main subunits: a(1), b(1), b'(1) and c(9-12).

The protein localises to the cell membrane. It carries out the reaction ATP + H2O + 4 H(+)(in) = ADP + phosphate + 5 H(+)(out). Produces ATP from ADP in the presence of a proton gradient across the membrane. The alpha chain is a regulatory subunit. The chain is ATP synthase subunit alpha from Roseiflexus sp. (strain RS-1).